Consider the following 462-residue polypeptide: Serine--tRNA ligase, cytoplasmic (462 aa).

246–248 (TSE) lines the L-serine pocket. ATP-binding positions include 279–281 (RRE) and valine 295. L-serine is bound at residue glutamate 302. 366–369 (ELVS) lines the ATP pocket. Residue threonine 404 coordinates L-serine.

This sequence belongs to the class-II aminoacyl-tRNA synthetase family. Type-1 seryl-tRNA synthetase subfamily. As to quaternary structure, homodimer. The tRNA molecule binds across the dimer.

The protein localises to the cytoplasm. It is found in the cytosol. The catalysed reaction is tRNA(Ser) + L-serine + ATP = L-seryl-tRNA(Ser) + AMP + diphosphate + H(+). In terms of biological role, catalyzes the attachment of serine to tRNA(Ser) in a two-step reaction: serine is first activated by ATP to form Ser-AMP and then transferred to the acceptor end of tRNA(Ser). This chain is Serine--tRNA ligase, cytoplasmic (SES1), found in Candida albicans (strain SC5314 / ATCC MYA-2876) (Yeast).